The primary structure comprises 192 residues: Xanthine phosphoribosyltransferase (192 aa).

Xanthine-binding residues include Leu20 and Asn27. 128–132 contributes to the 5-phospho-alpha-D-ribose 1-diphosphate binding site; that stretch reads ANGQA. Lys156 provides a ligand contact to xanthine.

This sequence belongs to the purine/pyrimidine phosphoribosyltransferase family. Xpt subfamily. As to quaternary structure, homodimer.

It localises to the cytoplasm. It carries out the reaction XMP + diphosphate = xanthine + 5-phospho-alpha-D-ribose 1-diphosphate. Its pathway is purine metabolism; XMP biosynthesis via salvage pathway; XMP from xanthine: step 1/1. Converts the preformed base xanthine, a product of nucleic acid breakdown, to xanthosine 5'-monophosphate (XMP), so it can be reused for RNA or DNA synthesis. The polypeptide is Xanthine phosphoribosyltransferase (Listeria monocytogenes serotype 4b (strain CLIP80459)).